The sequence spans 636 residues: tRNA 5-methylaminomethyl-2-thiouridine biosynthesis bifunctional protein MnmC (636 aa).

The segment at 1-202 (MTVSKILKQV…ERAALRAQSH (202 aa)) is tRNA (mnm(5)s(2)U34)-methyltransferase. Residues 227-636 (IGGGVASACL…GKALEMSGKS (410 aa)) are FAD-dependent cmnm(5)s(2)U34 oxidoreductase.

This sequence in the N-terminal section; belongs to the methyltransferase superfamily. tRNA (mnm(5)s(2)U34)-methyltransferase family. It in the C-terminal section; belongs to the DAO family. Requires FAD as cofactor.

Its subcellular location is the cytoplasm. It catalyses the reaction 5-aminomethyl-2-thiouridine(34) in tRNA + S-adenosyl-L-methionine = 5-methylaminomethyl-2-thiouridine(34) in tRNA + S-adenosyl-L-homocysteine + H(+). In terms of biological role, catalyzes the last two steps in the biosynthesis of 5-methylaminomethyl-2-thiouridine (mnm(5)s(2)U) at the wobble position (U34) in tRNA. Catalyzes the FAD-dependent demodification of cmnm(5)s(2)U34 to nm(5)s(2)U34, followed by the transfer of a methyl group from S-adenosyl-L-methionine to nm(5)s(2)U34, to form mnm(5)s(2)U34. This chain is tRNA 5-methylaminomethyl-2-thiouridine biosynthesis bifunctional protein MnmC, found in Shewanella halifaxensis (strain HAW-EB4).